We begin with the raw amino-acid sequence, 161 residues long: uncharacterized protein (161 aa).

To M.thermoautotrophicum MTH862.

This is an uncharacterized protein from Methanocaldococcus jannaschii (strain ATCC 43067 / DSM 2661 / JAL-1 / JCM 10045 / NBRC 100440) (Methanococcus jannaschii).